Here is a 199-residue protein sequence, read N- to C-terminus: 3-isopropylmalate dehydratase small subunit (199 aa).

The protein belongs to the LeuD family. LeuD type 1 subfamily. In terms of assembly, heterodimer of LeuC and LeuD.

The catalysed reaction is (2R,3S)-3-isopropylmalate = (2S)-2-isopropylmalate. It participates in amino-acid biosynthesis; L-leucine biosynthesis; L-leucine from 3-methyl-2-oxobutanoate: step 2/4. In terms of biological role, catalyzes the isomerization between 2-isopropylmalate and 3-isopropylmalate, via the formation of 2-isopropylmaleate. The protein is 3-isopropylmalate dehydratase small subunit of Aeromonas hydrophila subsp. hydrophila (strain ATCC 7966 / DSM 30187 / BCRC 13018 / CCUG 14551 / JCM 1027 / KCTC 2358 / NCIMB 9240 / NCTC 8049).